The chain runs to 426 residues: Serine--tRNA ligase (426 aa).

233 to 235 (TAE) is an L-serine binding site. Residue 264-266 (RSE) participates in ATP binding. E287 lines the L-serine pocket. 351–354 (EISS) serves as a coordination point for ATP. S387 provides a ligand contact to L-serine.

This sequence belongs to the class-II aminoacyl-tRNA synthetase family. Type-1 seryl-tRNA synthetase subfamily. Homodimer. The tRNA molecule binds across the dimer.

Its subcellular location is the cytoplasm. The enzyme catalyses tRNA(Ser) + L-serine + ATP = L-seryl-tRNA(Ser) + AMP + diphosphate + H(+). The catalysed reaction is tRNA(Sec) + L-serine + ATP = L-seryl-tRNA(Sec) + AMP + diphosphate + H(+). The protein operates within aminoacyl-tRNA biosynthesis; selenocysteinyl-tRNA(Sec) biosynthesis; L-seryl-tRNA(Sec) from L-serine and tRNA(Sec): step 1/1. Catalyzes the attachment of serine to tRNA(Ser). Is also able to aminoacylate tRNA(Sec) with serine, to form the misacylated tRNA L-seryl-tRNA(Sec), which will be further converted into selenocysteinyl-tRNA(Sec). The polypeptide is Serine--tRNA ligase (Clostridium tetani (strain Massachusetts / E88)).